A 116-amino-acid chain; its full sequence is Protein Rev (116 aa).

Ser5 and Ser8 each carry phosphoserine; by host CK2. The tract at residues Leu18 to Asn26 is homomultimerization. The interval Tyr23–Arg48 is disordered. The short motif at Thr34–Arg50 is the Nuclear localization signal and RNA-binding (RRE) element. A compositionally biased stretch (basic residues) spans Gln36–Glu47. Residues Leu73 to Asp84 carry the Nuclear export signal and binding to XPO1 motif. Ser92 and Ser99 each carry phosphoserine; by host. Positions Ser92–Glu116 are disordered.

It belongs to the HIV-1 REV protein family. As to quaternary structure, homomultimer; when bound to the RRE. Multimeric assembly is essential for activity and may involve XPO1. Binds to human KPNB1, XPO1, TNPO1, RANBP5 and IPO7. Interacts with the viral Integrase. Interacts with human KHDRBS1. Interacts with human NAP1; this interaction decreases Rev multimerization and stimulates its activity. Interacts with human DEAD-box helicases DDX3 and DDX24; these interactions may serve for viral RNA export to the cytoplasm and packaging, respectively. Interacts with human PSIP1; this interaction may inhibit HIV-1 DNA integration by promoting dissociation of the Integrase-LEDGF/p75 complex. In terms of processing, asymmetrically arginine dimethylated at one site by host PRMT6. Methylation impairs the RNA-binding activity and export of viral RNA from the nucleus to the cytoplasm. Post-translationally, phosphorylated by protein kinase CK2. Presence of, and maybe binding to the N-terminus of the regulatory beta subunit of CK2 is necessary for CK2-mediated Rev's phosphorylation.

The protein localises to the host nucleus. It is found in the host nucleolus. The protein resides in the host cytoplasm. Its function is as follows. Escorts unspliced or incompletely spliced viral pre-mRNAs (late transcripts) out of the nucleus of infected cells. These pre-mRNAs carry a recognition sequence called Rev responsive element (RRE) located in the env gene, that is not present in fully spliced viral mRNAs (early transcripts). This function is essential since most viral proteins are translated from unspliced or partially spliced pre-mRNAs which cannot exit the nucleus by the pathway used by fully processed cellular mRNAs. Rev itself is translated from a fully spliced mRNA that readily exits the nucleus. Rev's nuclear localization signal (NLS) binds directly to KPNB1/Importin beta-1 without previous binding to KPNA1/Importin alpha-1. KPNB1 binds to the GDP bound form of RAN (Ran-GDP) and targets Rev to the nucleus. In the nucleus, the conversion from Ran-GDP to Ran-GTP dissociates Rev from KPNB1 and allows Rev's binding to the RRE in viral pre-mRNAs. Rev multimerization on the RRE via cooperative assembly exposes its nuclear export signal (NES) to the surface. Rev can then form a complex with XPO1/CRM1 and Ran-GTP, leading to nuclear export of the complex. Conversion from Ran-GTP to Ran-GDP mediates dissociation of the Rev/RRE/XPO1/RAN complex, so that Rev can return to the nucleus for a subsequent round of export. Beside KPNB1, also seems to interact with TNPO1/Transportin-1, RANBP5/IPO5 and IPO7/RANBP7 for nuclear import. The nucleoporin-like HRB/RIP is an essential cofactor that probably indirectly interacts with Rev to release HIV RNAs from the perinuclear region to the cytoplasm. The polypeptide is Protein Rev (Human immunodeficiency virus type 1 group M subtype B (isolate SC) (HIV-1)).